The sequence spans 306 residues: Bifunctional protein FolD 2 (306 aa).

Residues 169–171 and isoleucine 235 contribute to the NADP(+) site; that span reads GHS.

This sequence belongs to the tetrahydrofolate dehydrogenase/cyclohydrolase family. Homodimer.

It catalyses the reaction (6R)-5,10-methylene-5,6,7,8-tetrahydrofolate + NADP(+) = (6R)-5,10-methenyltetrahydrofolate + NADPH. The catalysed reaction is (6R)-5,10-methenyltetrahydrofolate + H2O = (6R)-10-formyltetrahydrofolate + H(+). The protein operates within one-carbon metabolism; tetrahydrofolate interconversion. Its function is as follows. Catalyzes the oxidation of 5,10-methylenetetrahydrofolate to 5,10-methenyltetrahydrofolate and then the hydrolysis of 5,10-methenyltetrahydrofolate to 10-formyltetrahydrofolate. This chain is Bifunctional protein FolD 2, found in Mesorhizobium japonicum (strain LMG 29417 / CECT 9101 / MAFF 303099) (Mesorhizobium loti (strain MAFF 303099)).